Reading from the N-terminus, the 214-residue chain is Adenylate kinase (214 aa).

10 to 15 (GAGKGT) serves as a coordination point for ATP. The NMP stretch occupies residues 30-59 (STGDMLRAAVKAGTPLGLEAKKVMDAGQLV). AMP-binding positions include Thr31, Arg36, 57–59 (QLV), 85–88 (GFPR), and Gln92. Residues 122 to 159 (GRRVHPGSGRVYHVVFNPPKVEGKDDVTGEDLAIRPDD) are LID. Residues Arg123 and 132-133 (VY) contribute to the ATP site. Residues Arg156 and Arg167 each contribute to the AMP site. Residue Gln200 participates in ATP binding.

This sequence belongs to the adenylate kinase family. As to quaternary structure, monomer.

The protein localises to the cytoplasm. It carries out the reaction AMP + ATP = 2 ADP. Its pathway is purine metabolism; AMP biosynthesis via salvage pathway; AMP from ADP: step 1/1. In terms of biological role, catalyzes the reversible transfer of the terminal phosphate group between ATP and AMP. Plays an important role in cellular energy homeostasis and in adenine nucleotide metabolism. This is Adenylate kinase from Shewanella baltica (strain OS155 / ATCC BAA-1091).